Reading from the N-terminus, the 369-residue chain is Ribosomal RNA large subunit methyltransferase M (369 aa).

Residues S198, 231–234 (APGG), D250, D270, and D287 contribute to the S-adenosyl-L-methionine site. The Proton acceptor role is filled by K316.

This sequence belongs to the class I-like SAM-binding methyltransferase superfamily. RNA methyltransferase RlmE family. RlmM subfamily. Monomer.

It localises to the cytoplasm. The catalysed reaction is cytidine(2498) in 23S rRNA + S-adenosyl-L-methionine = 2'-O-methylcytidine(2498) in 23S rRNA + S-adenosyl-L-homocysteine + H(+). Functionally, catalyzes the 2'-O-methylation at nucleotide C2498 in 23S rRNA. The sequence is that of Ribosomal RNA large subunit methyltransferase M from Idiomarina loihiensis (strain ATCC BAA-735 / DSM 15497 / L2-TR).